The following is a 116-amino-acid chain: uncharacterized protein (116 aa).

A signal peptide spans 1–21 (MAPSTAMLIMGLLKLPRLRLA).

This is an uncharacterized protein from Saccharomyces cerevisiae (strain ATCC 204508 / S288c) (Baker's yeast).